Consider the following 203-residue polypeptide: MRERMHNLVPYVIEQSGGGERSYDIFSRLLKDRIIFVDGEITDAVADLVVAQLLFLESQNPDKDISLYINSPGGAVTAGLAVYDTMQHICPEVQTICLGQASSMAAVLLAGGAPGKRFALPSSRVMIHQPWGGVQGQASDVCIQAQEILRLKTLTIAYFALHTGQSEEQVREDMERDFFLSAEQACSYGIVDTVMKRRKHAQV.

The active-site Nucleophile is the S103. H128 is an active-site residue.

The protein belongs to the peptidase S14 family. Fourteen ClpP subunits assemble into 2 heptameric rings which stack back to back to give a disk-like structure with a central cavity, resembling the structure of eukaryotic proteasomes.

It is found in the cytoplasm. It carries out the reaction Hydrolysis of proteins to small peptides in the presence of ATP and magnesium. alpha-casein is the usual test substrate. In the absence of ATP, only oligopeptides shorter than five residues are hydrolyzed (such as succinyl-Leu-Tyr-|-NHMec, and Leu-Tyr-Leu-|-Tyr-Trp, in which cleavage of the -Tyr-|-Leu- and -Tyr-|-Trp bonds also occurs).. Its function is as follows. Cleaves peptides in various proteins in a process that requires ATP hydrolysis. Has a chymotrypsin-like activity. Plays a major role in the degradation of misfolded proteins. The sequence is that of ATP-dependent Clp protease proteolytic subunit 1 from Treponema pallidum (strain Nichols).